The primary structure comprises 345 residues: Methionine import ATP-binding protein MetN (345 aa).

Residues 2 to 241 (IKLNNIXKIF…PKTELAQEFI (240 aa)) enclose the ABC transporter domain. 38–45 (GASGAGKS) is a binding site for ATP.

This sequence belongs to the ABC transporter superfamily. Methionine importer (TC 3.A.1.24) family. In terms of assembly, the complex is composed of two ATP-binding proteins (MetN), two transmembrane proteins (MetI) and a solute-binding protein (MetQ).

The protein resides in the cell inner membrane. It carries out the reaction L-methionine(out) + ATP + H2O = L-methionine(in) + ADP + phosphate + H(+). It catalyses the reaction D-methionine(out) + ATP + H2O = D-methionine(in) + ADP + phosphate + H(+). Part of the ABC transporter complex MetNIQ involved in methionine import. Responsible for energy coupling to the transport system. This Haemophilus influenzae (strain ATCC 51907 / DSM 11121 / KW20 / Rd) protein is Methionine import ATP-binding protein MetN.